The primary structure comprises 343 residues: Protein FAM50A-B (343 aa).

Disordered regions lie at residues 1-25 and 125-181; these read MAQYKGAASEAGRAMQLMKKREKQR and EEDE…EEEN. A compositionally biased stretch (acidic residues) spans 125-142; sequence EEDEECEDEESEEEEEEY. A compositionally biased stretch (basic and acidic residues) spans 172–181; that stretch reads PDRDREEEEN.

It belongs to the FAM50 family.

It localises to the nucleus. Functionally, probably involved in the regulation of pre-mRNA splicing. This chain is Protein FAM50A-B (fam50a-b), found in Xenopus laevis (African clawed frog).